A 219-amino-acid polypeptide reads, in one-letter code: Cytidylate kinase (219 aa).

11–19 (GPAGVGKTT) is an ATP binding site.

It belongs to the cytidylate kinase family. Type 1 subfamily.

It localises to the cytoplasm. The enzyme catalyses CMP + ATP = CDP + ADP. The catalysed reaction is dCMP + ATP = dCDP + ADP. In Oleidesulfovibrio alaskensis (strain ATCC BAA-1058 / DSM 17464 / G20) (Desulfovibrio alaskensis), this protein is Cytidylate kinase.